We begin with the raw amino-acid sequence, 160 residues long: Bacterial microcompartment shell protein PduK (160 aa).

Residues 11–96 (SLGLLEVCGL…PGEGILLAET (86 aa)) form the BMC domain.

The protein belongs to the bacterial microcompartments protein family. As to quaternary structure, interacts with shell proteins PduA and PduP and assembly protein PduM. It depends on Fe cation as a cofactor.

The protein resides in the bacterial microcompartment. The protein operates within polyol metabolism; 1,2-propanediol degradation. Its function is as follows. A minor shell protein of the bacterial microcompartment (BMC) dedicated to 1,2-propanediol (1,2-PD) degradation. The isolated BMC shell component protein ratio for J:A:B':B:K:T:U is approximately 15:10:7:6:1:1:2. Not required for structural integrity of BMCs nor to mitigate propionaldehyde toxicity, it might be involved in spatial organization of BMCs. In terms of biological role, the 1,2-PD-specific bacterial microcompartment (BMC) concentrates low levels of 1,2-PD catabolic enzymes, concentrates volatile reaction intermediates thus enhancing pathway flux and keeps the level of toxic, mutagenic propionaldehyde low. This Salmonella typhimurium (strain LT2 / SGSC1412 / ATCC 700720) protein is Bacterial microcompartment shell protein PduK.